The primary structure comprises 226 residues: Gap junction beta-2 protein (226 aa).

An intramembrane segment occupies 2 to 13; that stretch reads DWGTLQTILGGV. Over 14-20 the chain is Cytoplasmic; sequence NKHSTSI. Residues 21 to 40 traverse the membrane as a helical segment; sequence GKIWLTVLFIFRIMILVVAA. The Extracellular portion of the chain corresponds to 41–73; the sequence is KEVWGDEQADFVCNTLQPGCKNVCYDHYFPISH. Residues Glu-42, Gly-45, and Glu-47 each contribute to the Ca(2+) site. Cystine bridges form between Cys-53–Cys-180, Cys-60–Cys-174, and Cys-64–Cys-169. The helical transmembrane segment at 74–94 threads the bilayer; sequence IRLWALQLIFVSTPALLVAMH. The Cytoplasmic portion of the chain corresponds to 95 to 135; sequence VAYRRHEKKRKFIKGEIKSEFKDIEEIKTQKVRIEGSLWWT. Residues 136-156 traverse the membrane as a helical segment; sequence YTSSIFFRVIFEAAFMYVFYV. At 157–189 the chain is on the extracellular side; that stretch reads MYDGFSMQRLVKCNAWPCPNTVDCFVSRPTEKT. The helical transmembrane segment at 190 to 210 threads the bilayer; it reads VFTVFMIAVSGICILLNVTEL. Over 211 to 226 the chain is Cytoplasmic; that stretch reads CYLLIRYCSGKSKKPV.

The protein belongs to the connexin family. Beta-type (group I) subfamily. As to quaternary structure, a hemichannel or connexon is composed of a hexamer of connexins. A functional gap junction is formed by the apposition of two hemichannels. Forms heteromeric channels with GJB4. Interacts with CNST.

Its subcellular location is the cell membrane. The protein resides in the cell junction. It localises to the gap junction. Its function is as follows. Structural component of gap junctions. Gap junctions are dodecameric channels that connect the cytoplasm of adjoining cells. They are formed by the docking of two hexameric hemichannels, one from each cell membrane. Small molecules and ions diffuse from one cell to a neighboring cell via the central pore. The chain is Gap junction beta-2 protein (GJB2) from Gorilla gorilla gorilla (Western lowland gorilla).